The primary structure comprises 531 residues: Anthranilate synthase component 1 (531 aa).

L-tryptophan is bound by residues Ser56 and 284-286 (PYM). Position 324-325 (324-325 (GS)) interacts with chorismate. A Mg(2+)-binding site is contributed by Glu351. Chorismate-binding positions include Tyr439, Arg459, 473-475 (GGG), and Gly475. Glu488 contacts Mg(2+). The tract at residues 506 to 531 (LHNITPDSVSAPDSVSSPDSVTEANS) is disordered. Low complexity predominate over residues 511–531 (PDSVSAPDSVSSPDSVTEANS).

It belongs to the anthranilate synthase component I family. In terms of assembly, heterotetramer consisting of two non-identical subunits: a beta subunit (TrpG) and a large alpha subunit (TrpE). Mg(2+) serves as cofactor.

The catalysed reaction is chorismate + L-glutamine = anthranilate + pyruvate + L-glutamate + H(+). It participates in amino-acid biosynthesis; L-tryptophan biosynthesis; L-tryptophan from chorismate: step 1/5. With respect to regulation, feedback inhibited by tryptophan. Part of a heterotetrameric complex that catalyzes the two-step biosynthesis of anthranilate, an intermediate in the biosynthesis of L-tryptophan. In the first step, the glutamine-binding beta subunit (TrpG) of anthranilate synthase (AS) provides the glutamine amidotransferase activity which generates ammonia as a substrate that, along with chorismate, is used in the second step, catalyzed by the large alpha subunit of AS (TrpE) to produce anthranilate. In the absence of TrpG, TrpE can synthesize anthranilate directly from chorismate and high concentrations of ammonia. This chain is Anthranilate synthase component 1 (trpE), found in Arthrobacter globiformis.